The sequence spans 185 residues: Ribosome-recycling factor (185 aa).

Belongs to the RRF family.

It is found in the cytoplasm. Its function is as follows. Responsible for the release of ribosomes from messenger RNA at the termination of protein biosynthesis. May increase the efficiency of translation by recycling ribosomes from one round of translation to another. The protein is Ribosome-recycling factor of Xanthomonas campestris pv. campestris (strain 8004).